Consider the following 140-residue polypeptide: MAEEPQSVLQLPTSIAAGGEGLTDVSPETTTPEPPSSAAVSPGTEEPAGDTKKKIDILLKAVGDTPIMKTKKWAVERTRTIQGLIDFIKKFLKLVASEQLFIYVNQSFAPSPDQEVGTLYECFGSDGKLVLHYCKSQAWG.

Positions 1 to 50 (MAEEPQSVLQLPTSIAAGGEGLTDVSPETTTPEPPSSAAVSPGTEEPAGD) are disordered. The segment covering 25 to 42 (VSPETTTPEPPSSAAVSP) has biased composition (low complexity). Residue G140 forms a Glycyl lysine isopeptide (Gly-Lys) (interchain with K-130 in ATG5) linkage.

Belongs to the ATG12 family. In terms of assembly, forms a conjugate with ATG5. Part of the minor complex composed of 4 sets of ATG12-ATG5 and ATG16L1 (400 kDa); this complex interacts with ATG3 leading to disruption of ATG7 interaction and promotion of ATG8-like proteins lipidation. Forms an 800-kDa complex composed of ATG12-ATG5 and ATG16L2. Interacts with DHX58/RIG-1, IFIH1/MDA5 and MAVS/IPS-1 in monomeric form as well as in ATG12-ATG5 conjugate. The interaction with MAVS is further enhanced upon vesicular stomatitis virus (VSV) infection. Interacts with ATG3; this interaction is essential for phosphatidylethanolamine (PE)-conjugated ATG8-like proteins formation. Interacts with ATG7. Interacts with ATG10. The ATG12-ATG5 conjugate interacts with RAB33A; this interaction is bridged by ATG16L1 and promotes ATG12-ATG5-ATG16L1 complex recruitment to phagophores. Interacts with TECPR1. Interacts with SH3BGRL. The ATG12-ATG5 conjugate interacts with PDCD6IP (via the BRO1 domain); this interaction is bridged by ATG12 and promotes multiple PDCD6IP-mediated functions such as endolysosomal trafficking, macroautophagy and exosome biogenesis. Post-translationally, acetylated by EP300. As to expression, ubiquitous.

It is found in the cytoplasm. The protein resides in the preautophagosomal structure membrane. Its function is as follows. Ubiquitin-like protein involved in autophagy vesicles formation. Conjugation with ATG5 through a ubiquitin-like conjugating system involving also ATG7 as an E1-like activating enzyme and ATG10 as an E2-like conjugating enzyme, is essential for its function. The ATG12-ATG5 conjugate acts as an E3-like enzyme which is required for lipidation of ATG8 family proteins and their association to the vesicle membranes. As part of the ATG8 conjugation system with ATG5 and ATG16L1, required for recruitment of LRRK2 to stressed lysosomes and induction of LRRK2 kinase activity in response to lysosomal stress. Functionally, (Microbial infection) May act as a proviral factor. In association with ATG5, negatively regulates the innate antiviral immune response by impairing the type I IFN production pathway upon vesicular stomatitis virus (VSV) infection. Required for the translation of incoming hepatitis C virus (HCV) RNA and, thereby, for the initiation of HCV replication, but not required once infection is established. The chain is Ubiquitin-like protein ATG12 from Homo sapiens (Human).